The following is a 100-amino-acid chain: MVKSAMKIVILILFVLLIRVESKRNGYPDISDGKSSTCRTTVEDSEEDFCVNVCKSIQGRTGNCCLGTCFCFDLPDEQKIVDVMDTTIEYCEWDEEEEEE.

A signal peptide spans 1-22 (MVKSAMKIVILILFVLLIRVES). In terms of domain architecture, LCN-type CS-alpha/beta spans 24-92 (RNGYPDISDG…VMDTTIEYCE (69 aa)). Intrachain disulfides connect cysteine 38/cysteine 64, cysteine 50/cysteine 69, cysteine 54/cysteine 71, and cysteine 65/cysteine 91.

The protein belongs to the long (4 C-C) scorpion toxin superfamily. Sodium channel inhibitor family. In terms of tissue distribution, expressed by the venom gland.

The protein localises to the secreted. In terms of biological role, putative sodium channel toxin. The chain is Putative sodium channel toxin Ts26 from Tityus serrulatus (Brazilian scorpion).